Consider the following 645-residue polypeptide: Pro-neuregulin-1, membrane-bound isoform (645 aa).

Positions 1–19 are excised as a propeptide; it reads MSERKEGRGKGKGKKKDRG. The interval 1–52 is disordered; the sequence is MSERKEGRGKGKGKKKDRGSRGKPAPAEGDPSPALPPRLKEMKSQESAAGSK. Over 20-247 the chain is Extracellular; sequence SRGKPAPAEG…MEAEELYQKR (228 aa). Residues 37 to 128 form the Ig-like C2-type domain; sequence PRLKEMKSQE…GNDSASANIT (92 aa). Cysteine 57 and cysteine 112 are oxidised to a cystine. Positions 139-164 are enriched in polar residues; the sequence is MSASTERPYVSSESPIRISVSTEGAN. The segment at 139 to 175 is disordered; sequence MSASTERPYVSSESPIRISVSTEGANTSSSTSTSTTG. The segment covering 165-175 has biased composition (low complexity); that stretch reads TSSSTSTSTTG. The EGF-like domain maps to 178–222; it reads HLIKCAEKEKTFCVNGGECFMVKDLSNPSRYLCKCPNEFTGDRCQ. 3 disulfides stabilise this stretch: cysteine 182/cysteine 196, cysteine 190/cysteine 210, and cysteine 212/cysteine 221. The helical transmembrane segment at 248–268 threads the bilayer; the sequence is VLTITGICIALLVVGIMCVVA. Residues 269-645 lie on the Cytoplasmic side of the membrane; the sequence is YCKTKKQRQK…VIANQDPIAV (377 aa). Residues 340–355 are compositionally biased toward low complexity; sequence SHYTSTAHHSTTVTQT. Disordered regions lie at residues 340 to 364, 380 to 406, 433 to 463, and 531 to 593; these read SHYT…SNGH, SVEN…PREC, MTTP…PVSS, and ETTQ…DTPF. The segment covering 392–402 has biased composition (gly residues); the sequence is GPRGRLHGLGG. Positions 547-557 are enriched in basic residues; sequence TNSRRAKRTKP. The span at 568-579 shows a compositional bias: low complexity; it reads DSNPSSVSSNSE.

It belongs to the neuregulin family. The cytoplasmic domain interacts with the LIM domain region of LIMK1. Forms a ternary complex with ERBB3 and ITGAV:ITGB3 or ITGA6:ITGB4. Interacts with NRDC and BACE1. Post-translationally, proteolytic cleavage close to the plasma membrane on the external face leads to the release of the soluble growth factor form. In terms of processing, N- and O-glycosylated. Extensive glycosylation precedes the proteolytic cleavage.

The protein resides in the cell membrane. The protein localises to the secreted. Direct ligand for ERBB3 and ERBB4 tyrosine kinase receptors. Concomitantly recruits ERBB1 and ERBB2 coreceptors, resulting in ligand-stimulated tyrosine phosphorylation and activation of the ERBB receptors. Perform diverse functions such as inducing growth and differentiation of epithelial, glial, neuronal, and skeletal muscle cells; inducing expression of acetylcholine receptor in synaptic vesicles during the formation of the neuromuscular junction; stimulating lobuloalveolar budding and milk production in the mammary gland and inducing differentiation of mammary tumor cells; stimulating Schwann cell proliferation; implication in the development of the myocardium such as trabeculation of the developing heart. Binds to ERBB4 and ERBB3. Acts as a ligand for integrins and binds (via EGF domain) to integrins ITGAV:ITGB3 or ITGA6:ITGB4. Its binding to integrins and subsequent ternary complex formation with integrins and ERRB3 are essential for NRG1-ERBB signaling. Induces the phosphorylation and activation of MAPK3/ERK1, MAPK1/ERK2 and AKT1, and ligand-dependent ERBB4 endocytosis is essential for the NRG1-mediated activation of these kinases in neurons. The polypeptide is Pro-neuregulin-1, membrane-bound isoform (Mus musculus (Mouse)).